A 179-amino-acid chain; its full sequence is uncharacterized protein (179 aa).

Over residues 26–39 (AAKLAAATTPTHTA) the composition is skewed to low complexity. Positions 26 to 179 (AAKLAAATTP…RPRRNTLRHM (154 aa)) are disordered. Positions 150–165 (RQSVTQSTAARQTQPH) are enriched in polar residues. Basic residues predominate over residues 167 to 179 (GRPRPRRNTLRHM).

This is an uncharacterized protein from Equus caballus (Horse).